The primary structure comprises 271 residues: Cobalt import ATP-binding protein CbiO (271 aa).

The 235-residue stretch at 2-236 (LATSDLWFRY…TEAMEHAGLT (235 aa)) folds into the ABC transporter domain. 34-41 (GANGCGKS) is a binding site for ATP.

This sequence belongs to the ABC transporter superfamily. Cobalt importer (TC 3.A.1.18.1) family. Forms an energy-coupling factor (ECF) transporter complex composed of an ATP-binding protein (A component, CbiO), a transmembrane protein (T component, CbiQ) and 2 possible substrate-capture proteins (S components, CbiM and CbiN) of unknown stoichimetry. Expression of just CbiMN in E.coli confers some cobalt uptake.

Its subcellular location is the cell inner membrane. Its pathway is cofactor biosynthesis; adenosylcobalamin biosynthesis. In terms of biological role, part of the energy-coupling factor (ECF) transporter complex CbiMNOQ involved in cobalt import. The complex confers cobalt uptake upon expression in E.coli; can also transport nickel with a very low affinity. Presumably responsible for energy coupling to the transport system. The protein is Cobalt import ATP-binding protein CbiO of Salmonella typhimurium (strain LT2 / SGSC1412 / ATCC 700720).